We begin with the raw amino-acid sequence, 333 residues long: Heat shock transcription factor, X-linked member 3 (333 aa).

The interval Met-1 to Asn-66 is disordered. Positions Gly-29–Ser-39 are enriched in low complexity. The segment covering Ala-49–Ser-60 has biased composition (polar residues). The DNA-binding element occupies Phe-79 to Lys-182. Residues Gln-227–Gly-275 are disordered. A compositionally biased stretch (polar residues) spans Gly-228–Arg-242.

The protein belongs to the HSF family.

It is found in the nucleus. The protein is Heat shock transcription factor, X-linked member 3 of Homo sapiens (Human).